The chain runs to 130 residues: Small ribosomal subunit protein uS11 (130 aa).

Belongs to the universal ribosomal protein uS11 family. As to quaternary structure, part of the 30S ribosomal subunit. Interacts with proteins S7 and S18. Binds to IF-3.

In terms of biological role, located on the platform of the 30S subunit, it bridges several disparate RNA helices of the 16S rRNA. Forms part of the Shine-Dalgarno cleft in the 70S ribosome. The chain is Small ribosomal subunit protein uS11 from Rippkaea orientalis (strain PCC 8801 / RF-1) (Cyanothece sp. (strain PCC 8801)).